A 480-amino-acid polypeptide reads, in one-letter code: Acyl-coenzyme A synthetase ACSM6, mitochondrial (480 aa).

A mitochondrion-targeting transit peptide spans 1 to 21 (MLGRFQPFSLVRSFRLGFEAC). Residues 226–234 (TKGTTGAPK), 366–371 (EGYGQT), D453, and R468 contribute to the ATP site.

Belongs to the ATP-dependent AMP-binding enzyme family. As to quaternary structure, monomer. Mg(2+) serves as cofactor. Requires Mn(2+) as cofactor.

It localises to the mitochondrion. It catalyses the reaction a medium-chain fatty acid + ATP + CoA = a medium-chain fatty acyl-CoA + AMP + diphosphate. Catalyzes the activation of fatty acids by CoA to produce an acyl-CoA, the first step in fatty acid metabolism. This chain is Acyl-coenzyme A synthetase ACSM6, mitochondrial (ACSM6), found in Homo sapiens (Human).